Here is a 225-residue protein sequence, read N- to C-terminus: 3-dehydroquinate dehydratase (225 aa).

Residues S6, E30–R32, and R62 contribute to the 3-dehydroquinate site. H118 functions as the Proton donor/acceptor in the catalytic mechanism. K143 serves as the catalytic Schiff-base intermediate with substrate. R186, T205, and Q209 together coordinate 3-dehydroquinate.

The protein belongs to the type-I 3-dehydroquinase family. In terms of assembly, homodimer.

The enzyme catalyses 3-dehydroquinate = 3-dehydroshikimate + H2O. Its pathway is metabolic intermediate biosynthesis; chorismate biosynthesis; chorismate from D-erythrose 4-phosphate and phosphoenolpyruvate: step 3/7. Its function is as follows. Involved in the third step of the chorismate pathway, which leads to the biosynthesis of aromatic amino acids. Catalyzes the cis-dehydration of 3-dehydroquinate (DHQ) and introduces the first double bond of the aromatic ring to yield 3-dehydroshikimate. This is 3-dehydroquinate dehydratase from Streptococcus gordonii (strain Challis / ATCC 35105 / BCRC 15272 / CH1 / DL1 / V288).